A 581-amino-acid polypeptide reads, in one-letter code: Leucine-rich repeat transmembrane neuronal protein 3 (581 aa).

The N-terminal stretch at 1-30 is a signal peptide; sequence MGFNVIRLLSGSAVALVIAPTVLLTMLSSA. The LRRNT domain occupies 31–61; it reads ERGCPKGCRCEGKMVYCESQKLQEIPSSISA. Residues 31–419 lie on the Extracellular side of the membrane; the sequence is ERGCPKGCRC…ADAEHISFHK (389 aa). 10 LRR repeats span residues 63–83, 86–107, 110–131, 134–155, 158–179, 182–203, 206–226, 230–251, 254–275, and 279–300; these read CLGL…QFKG, QLTW…AFNG, RLKE…TFRP, NLRN…QFRG, KLLS…IFQD, NLEL…VFAG, RLKE…ALFP, SLQN…MSWT, SLQR…SVFQ, and NLQR…ILDS. The N-linked (GlcNAc...) asparagine glycan is linked to Asn-126. In terms of domain architecture, LRRCT spans 312 to 363; that stretch reads NIWECSRNICSLVNWLKSFKGLRENTIICASPKELQGVNVIDAVKNYSICGK. An N-linked (GlcNAc...) asparagine glycan is attached at Asn-357. The tract at residues 377 to 408 is disordered; sequence KPTFKPKLPRPKHESKPPLPPTVGATEPGPET. Residues 420-440 traverse the membrane as a helical segment; it reads IIAGSVALFLSVLVILLVIYV. Topologically, residues 441 to 581 are cytoplasmic; the sequence is SWKRYPASMK…RISDHKQQLA (141 aa).

Belongs to the LRRTM family. In terms of tissue distribution, expressed in neuronal tissues.

Its subcellular location is the cell membrane. It localises to the postsynaptic cell membrane. In terms of biological role, exhibits a limited synaptogenic activity in vitro, restricted to excitatory presynaptic differentiation. May play a role in the development and maintenance of the vertebrate nervous system. This Homo sapiens (Human) protein is Leucine-rich repeat transmembrane neuronal protein 3 (LRRTM3).